The chain runs to 1664 residues: DNA-directed RNA polymerase I subunit RPA190 (1664 aa).

Cysteine 62, cysteine 65, cysteine 72, histidine 75, cysteine 102, cysteine 105, cysteine 233, and cysteine 236 together coordinate Zn(2+). Positions 280-310 (QAKKLDGSNEASANDEESFDVGRNPTTRPKT) are disordered. Mg(2+) contacts are provided by aspartate 627, aspartate 629, and aspartate 631. Residue serine 889 is modified to Phosphoserine. The segment at 992 to 1004 (PQEYYFHCMAGRE) is bridging helix. The tract at residues 1343-1423 (DIGVAVPRLQ…DSDSEDEDVD (81 aa)) is disordered. Basic and acidic residues predominate over residues 1393 to 1414 (ETMREAEKSSDEEGIDSDKESD). Serine 1636 is modified (phosphoserine).

It belongs to the RNA polymerase beta' chain family. As to quaternary structure, component of the RNA polymerase I (Pol I) complex consisting of 14 subunits: RPA135, RPA190, RPC40, RPA14, RPB5, RPO26, RPA43, RPB8, RPA12, RPB10, RPC19, RPC10, RPA49 and RPA34. The complex is composed of a horseshoe-shaped core containing ten subunits (RPA135, RPA190, RPB5, RPO26, RPB8, RPB10, RPC10, RPA12, RPC19 and RPC40) where RPA135 and RPA190 form the DNA-binding cleft. Outside of the core, RPA14 and RPA43 form the stalk that mediates interactions with transcription initiation factors and newly synthesized RNA.

It localises to the nucleus. The protein localises to the nucleolus. The catalysed reaction is RNA(n) + a ribonucleoside 5'-triphosphate = RNA(n+1) + diphosphate. DNA-dependent RNA polymerases catalyze the transcription of DNA into RNA using the four ribonucleoside triphosphates as substrates. Component of RNA polymerase I (Pol I) which synthesizes ribosomal RNA precursors. Besides, RNA polymerase I has intrinsic RNA cleavage activity. RPA190 and RPA135 both contribute to the polymerase catalytic activity and together form the Pol I active center. In addition, subunit RPA12 contributes a catalytic zinc ribbon that is required for RNA cleavage by Pol I. A single stranded DNA template strand of the promoter is positioned within the central active site cleft of Pol I. A bridging helix emanates from RPA190 and crosses the cleft near the catalytic site and is thought to promote translocation of Pol I by acting as a ratchet that moves the RNA-DNA hybrid through the active site by switching from straight to bent conformations at each step of nucleotide addition. In Saccharomyces cerevisiae (strain ATCC 204508 / S288c) (Baker's yeast), this protein is DNA-directed RNA polymerase I subunit RPA190 (RPA190).